Here is a 498-residue protein sequence, read N- to C-terminus: ATP synthase subunit beta, chloroplastic (498 aa).

Phosphothreonine is present on Thr-6. Ser-13 bears the Phosphoserine mark. 172–179 (GGAGVGKT) lines the ATP pocket.

The protein belongs to the ATPase alpha/beta chains family. F-type ATPases have 2 components, CF(1) - the catalytic core - and CF(0) - the membrane proton channel. CF(1) has five subunits: alpha(3), beta(3), gamma(1), delta(1), epsilon(1). CF(0) has four main subunits: a(1), b(1), b'(1) and c(9-12).

Its subcellular location is the plastid. The protein resides in the chloroplast thylakoid membrane. It catalyses the reaction ATP + H2O + 4 H(+)(in) = ADP + phosphate + 5 H(+)(out). Functionally, produces ATP from ADP in the presence of a proton gradient across the membrane. The catalytic sites are hosted primarily by the beta subunits. The sequence is that of ATP synthase subunit beta, chloroplastic from Barbarea verna (Land cress).